The following is a 198-amino-acid chain: NAD(P)H dehydrogenase (quinone) (198 aa).

A Flavodoxin-like domain is found at 4–189 (VLVLYYSMYG…SIARYQGEYV (186 aa)). FMN is bound by residues 10–15 (SMYGHI) and 78–80 (TRF). Y12 contacts NAD(+). Residue W98 coordinates substrate. FMN is bound by residues 113-118 (STGTGG) and H133.

The protein belongs to the WrbA family. Requires FMN as cofactor.

It carries out the reaction a quinone + NADH + H(+) = a quinol + NAD(+). It catalyses the reaction a quinone + NADPH + H(+) = a quinol + NADP(+). This is NAD(P)H dehydrogenase (quinone) from Escherichia fergusonii (strain ATCC 35469 / DSM 13698 / CCUG 18766 / IAM 14443 / JCM 21226 / LMG 7866 / NBRC 102419 / NCTC 12128 / CDC 0568-73).